A 91-amino-acid polypeptide reads, in one-letter code: Conotoxin Im9.1 (91 aa).

The N-terminal stretch at 1-23 (MSKVGVVPLIFLVLLSIAALQNG) is a signal peptide. The propeptide occupies 24 to 55 (DDPRRQRDEKQSPQGDILRSTLTKYSYNIQRR). 3 disulfide bridges follow: cysteine 56/cysteine 72, cysteine 63/cysteine 83, and cysteine 66/cysteine 86.

Belongs to the conotoxin M superfamily. Expressed by the venom duct.

It localises to the secreted. Functionally, probable neurotoxin. This is Conotoxin Im9.1 from Conus imperialis (Imperial cone).